The chain runs to 237 residues: Ribonuclease PH (237 aa).

Residues arginine 86 and 124-126 (GTR) each bind phosphate.

It belongs to the RNase PH family. In terms of assembly, homohexameric ring arranged as a trimer of dimers.

It catalyses the reaction tRNA(n+1) + phosphate = tRNA(n) + a ribonucleoside 5'-diphosphate. Functionally, phosphorolytic 3'-5' exoribonuclease that plays an important role in tRNA 3'-end maturation. Removes nucleotide residues following the 3'-CCA terminus of tRNAs; can also add nucleotides to the ends of RNA molecules by using nucleoside diphosphates as substrates, but this may not be physiologically important. Probably plays a role in initiation of 16S rRNA degradation (leading to ribosome degradation) during starvation. In Methylorubrum extorquens (strain PA1) (Methylobacterium extorquens), this protein is Ribonuclease PH.